Consider the following 221-residue polypeptide: MNTKICVPVFEKTAPEVTESAGRAIDAGADILEIRIDGLQNPGEVNIRELIEDIGFPVIATNRSPVEGGHFSGSEDERIKLLMAAAEVADFVDIELSSAREDIERVTGSARRSIVSYHNFRETPSLEALLRIVRMAKEMGDIAKVAVMPENLADTLVVLQLLTFEEDTVAISMGELGKYTRVAAALFGSPITFASMGRGTAPGQMDVDVTRKMIGELMPED.

3-dehydroquinate-binding positions include 33 to 35 (EIR) and Arg-63. His-118 acts as the Proton donor/acceptor in catalysis. Lys-144 functions as the Schiff-base intermediate with substrate in the catalytic mechanism. 3 residues coordinate 3-dehydroquinate: Arg-181, Thr-200, and Gln-204.

Belongs to the type-I 3-dehydroquinase family. In terms of assembly, homodimer.

It carries out the reaction 3-dehydroquinate = 3-dehydroshikimate + H2O. It participates in metabolic intermediate biosynthesis; chorismate biosynthesis; chorismate from D-erythrose 4-phosphate and phosphoenolpyruvate: step 3/7. In terms of biological role, involved in the third step of the chorismate pathway, which leads to the biosynthesis of aromatic amino acids. Catalyzes the cis-dehydration of 3-dehydroquinate (DHQ) and introduces the first double bond of the aromatic ring to yield 3-dehydroshikimate. The polypeptide is 3-dehydroquinate dehydratase (Methanothermobacter thermautotrophicus (strain ATCC 29096 / DSM 1053 / JCM 10044 / NBRC 100330 / Delta H) (Methanobacterium thermoautotrophicum)).